The primary structure comprises 500 residues: Histidinol dehydrogenase homolog 1 (500 aa).

Residues 1–25 are disordered; that stretch reads MPPAGGIFHRPPTTRKSRRLTPRSA. Residues 12-21 are compositionally biased toward basic residues; sequence PTTRKSRRLT. Positions 313 and 316 each coordinate Zn(2+). Active-site proton acceptor residues include Glu381 and His382. Residues Asp415 and His475 each contribute to the Zn(2+) site.

The protein belongs to the histidinol dehydrogenase family. Requires Zn(2+) as cofactor.

This is Histidinol dehydrogenase homolog 1 from Mesorhizobium japonicum (strain LMG 29417 / CECT 9101 / MAFF 303099) (Mesorhizobium loti (strain MAFF 303099)).